The following is a 521-amino-acid chain: Bifunctional purine biosynthesis protein PurH (521 aa).

An MGS-like domain is found at Met-1–Cys-145.

This sequence belongs to the PurH family.

It carries out the reaction (6R)-10-formyltetrahydrofolate + 5-amino-1-(5-phospho-beta-D-ribosyl)imidazole-4-carboxamide = 5-formamido-1-(5-phospho-D-ribosyl)imidazole-4-carboxamide + (6S)-5,6,7,8-tetrahydrofolate. The catalysed reaction is IMP + H2O = 5-formamido-1-(5-phospho-D-ribosyl)imidazole-4-carboxamide. The protein operates within purine metabolism; IMP biosynthesis via de novo pathway; 5-formamido-1-(5-phospho-D-ribosyl)imidazole-4-carboxamide from 5-amino-1-(5-phospho-D-ribosyl)imidazole-4-carboxamide (10-formyl THF route): step 1/1. Its pathway is purine metabolism; IMP biosynthesis via de novo pathway; IMP from 5-formamido-1-(5-phospho-D-ribosyl)imidazole-4-carboxamide: step 1/1. This Janthinobacterium sp. (strain Marseille) (Minibacterium massiliensis) protein is Bifunctional purine biosynthesis protein PurH.